Reading from the N-terminus, the 100-residue chain is uncharacterized protein (100 aa).

The protein belongs to the ycf15 family.

It localises to the plastid. Its subcellular location is the chloroplast. This is an uncharacterized protein from Panax ginseng (Korean ginseng).